The primary structure comprises 399 residues: Glucose-1-phosphate adenylyltransferase (399 aa).

Alpha-D-glucose 1-phosphate-binding positions include Gly-158, 174–175 (EK), and Ser-192.

It belongs to the bacterial/plant glucose-1-phosphate adenylyltransferase family. Homotetramer.

The enzyme catalyses alpha-D-glucose 1-phosphate + ATP + H(+) = ADP-alpha-D-glucose + diphosphate. It functions in the pathway glycan biosynthesis; glycogen biosynthesis. Its function is as follows. Involved in the biosynthesis of ADP-glucose, a building block required for the elongation reactions to produce glycogen. Catalyzes the reaction between ATP and alpha-D-glucose 1-phosphate (G1P) to produce pyrophosphate and ADP-Glc. In Streptomyces coelicolor (strain ATCC BAA-471 / A3(2) / M145), this protein is Glucose-1-phosphate adenylyltransferase.